A 429-amino-acid chain; its full sequence is Melanoma-associated antigen 11 (429 aa).

Disordered regions lie at residues 1-30 (METQ…GDFG) and 188-215 (IFGS…IDPE). Positions 194-209 (DEGSGSQEKEGPSTSP) are enriched in polar residues. The MAGE domain occupies 222-421 (LHDKIIDLVH…TSYPSLYEDA (200 aa)).

Expressed in tumors of several types, such as melanoma, head and neck squamous cell carcinoma, lung carcinoma and breast carcinoma. Expressed in testis, ovary, prostate, cancerous prostate, breast and adrenal tissue.

It is found in the nucleus. Its subcellular location is the cytoplasm. Acts as androgen receptor coregulator that increases androgen receptor activity by modulating the receptors interdomain interaction. May play a role in embryonal development and tumor transformation or aspects of tumor progression. This Homo sapiens (Human) protein is Melanoma-associated antigen 11.